The primary structure comprises 78 residues: Large ribosomal subunit protein bL28B (78 aa).

Belongs to the bacterial ribosomal protein bL28 family.

In Streptomyces coelicolor (strain ATCC BAA-471 / A3(2) / M145), this protein is Large ribosomal subunit protein bL28B (rpmB2).